The following is a 430-amino-acid chain: Enolase (430 aa).

Residue Q168 participates in (2R)-2-phosphoglycerate binding. E210 acts as the Proton donor in catalysis. Mg(2+) contacts are provided by D247, E288, and D315. (2R)-2-phosphoglycerate contacts are provided by K340, R369, S370, and K391. The active-site Proton acceptor is K340.

The protein belongs to the enolase family. Mg(2+) is required as a cofactor.

It is found in the cytoplasm. Its subcellular location is the secreted. It localises to the cell surface. The enzyme catalyses (2R)-2-phosphoglycerate = phosphoenolpyruvate + H2O. Its pathway is carbohydrate degradation; glycolysis; pyruvate from D-glyceraldehyde 3-phosphate: step 4/5. Its function is as follows. Catalyzes the reversible conversion of 2-phosphoglycerate (2-PG) into phosphoenolpyruvate (PEP). It is essential for the degradation of carbohydrates via glycolysis. In Picosynechococcus sp. (strain ATCC 27264 / PCC 7002 / PR-6) (Agmenellum quadruplicatum), this protein is Enolase.